A 238-amino-acid polypeptide reads, in one-letter code: Probable tetraspanin tspC (238 aa).

The Cytoplasmic portion of the chain corresponds to 1–16 (MVNTRDFLPKTTHYLK). Residues 17–37 (VPIIGLNAILWLLGLVLIVVG) form a helical membrane-spanning segment. The Extracellular segment spans residues 38-69 (SVCISFFSNFKEFTKESGYKNALSNLTTSAPT). The N-linked (GlcNAc...) asparagine glycan is linked to Asn-62. The helical transmembrane segment at 70 to 90 (GVLVIGIFFILLTLVGCFVAY) threads the bilayer. The Cytoplasmic segment spans residues 91–93 (KEK). Residues 94–114 (LVGLVLYTMLMLILLVVLIGI) traverse the membrane as a helical segment. Residues 115–197 (GGKALTLDKE…GIFTKQVSSK (83 aa)) are Extracellular-facing. N-linked (GlcNAc...) asparagine glycans are attached at residues Asn-143 and Asn-164. A helical membrane pass occupies residues 198-218 (LVLVGIAGVVIGCIEFVAMAL). The Cytoplasmic segment spans residues 219–238 (SLFLIIRICRSPRSRAYDQY).

The protein belongs to the tetraspanin (TM4SF) family.

The protein localises to the membrane. This Dictyostelium discoideum (Social amoeba) protein is Probable tetraspanin tspC (tspC).